Consider the following 364-residue polypeptide: MPILLDPVRAPALDALLASANTQGLDWRIEAAADATLPRIRGIGTLASAGPEEISFLTNPRYQSQLAGTRAAAVIVTPDAAQALANDPSAPACARVVCPHPYLLYARLAQWFDAARRPRLPASVHPLAVVAPDAVIEDDVRIGPHCVVEAGASIGRGSTLGPGCVIGEGSSLGPDCLLHARVTLYANVRIGARAILHSGVVLGADGFGFAPDPTLGQGAWGKIAQLGGVRIGDDVEIGANTTIDRGALEDTDIGDGVKLDNQIMLGHNVRVGAHTAMAACVGVAGSTVIGSRCTIGGAAMLSGHLTLGDDVHISGGTAVTSNILQPGRYTGVYPYAEHGEWQRNAAVLQQLSQLRRRLRALEKA.

H267 (proton acceptor) is an active-site residue.

It belongs to the transferase hexapeptide repeat family. LpxD subfamily. As to quaternary structure, homotrimer.

The catalysed reaction is a UDP-3-O-[(3R)-3-hydroxyacyl]-alpha-D-glucosamine + a (3R)-hydroxyacyl-[ACP] = a UDP-2-N,3-O-bis[(3R)-3-hydroxyacyl]-alpha-D-glucosamine + holo-[ACP] + H(+). The protein operates within bacterial outer membrane biogenesis; LPS lipid A biosynthesis. Functionally, catalyzes the N-acylation of UDP-3-O-acylglucosamine using 3-hydroxyacyl-ACP as the acyl donor. Is involved in the biosynthesis of lipid A, a phosphorylated glycolipid that anchors the lipopolysaccharide to the outer membrane of the cell. In Bordetella petrii (strain ATCC BAA-461 / DSM 12804 / CCUG 43448), this protein is UDP-3-O-acylglucosamine N-acyltransferase.